The chain runs to 363 residues: Phospho-N-acetylmuramoyl-pentapeptide-transferase (363 aa).

10 consecutive transmembrane segments (helical) span residues 15–33 (FTTL…SFIF), 82–102 (NTPT…LLIV), 106–126 (FYSM…IIGF), 147–167 (FILQ…NGYI), 183–203 (IVIF…VNLT), 207–227 (DGLA…EIFI), 233–253 (LIIY…FLKF), 260–280 (IFMG…ISIL), 285–305 (FTLF…IIQV), and 341–361 (IVEN…VLKI).

Belongs to the glycosyltransferase 4 family. MraY subfamily. Mg(2+) is required as a cofactor.

It is found in the cell inner membrane. The enzyme catalyses UDP-N-acetyl-alpha-D-muramoyl-L-alanyl-gamma-D-glutamyl-meso-2,6-diaminopimeloyl-D-alanyl-D-alanine + di-trans,octa-cis-undecaprenyl phosphate = di-trans,octa-cis-undecaprenyl diphospho-N-acetyl-alpha-D-muramoyl-L-alanyl-D-glutamyl-meso-2,6-diaminopimeloyl-D-alanyl-D-alanine + UMP. The protein operates within cell wall biogenesis; peptidoglycan biosynthesis. Its function is as follows. Catalyzes the initial step of the lipid cycle reactions in the biosynthesis of the cell wall peptidoglycan: transfers peptidoglycan precursor phospho-MurNAc-pentapeptide from UDP-MurNAc-pentapeptide onto the lipid carrier undecaprenyl phosphate, yielding undecaprenyl-pyrophosphoryl-MurNAc-pentapeptide, known as lipid I. This chain is Phospho-N-acetylmuramoyl-pentapeptide-transferase, found in Prochlorococcus marinus (strain MIT 9515).